We begin with the raw amino-acid sequence, 101 residues long: Small ribosomal subunit protein uS14 (101 aa).

Positions 1-24 (MAKVSSIKKNEKRKKLSQSLHNKR) are disordered. Residues 10 to 24 (NEKRKKLSQSLHNKR) show a composition bias toward basic residues.

It belongs to the universal ribosomal protein uS14 family. As to quaternary structure, part of the 30S ribosomal subunit. Contacts proteins S3 and S10.

Binds 16S rRNA, required for the assembly of 30S particles and may also be responsible for determining the conformation of the 16S rRNA at the A site. This is Small ribosomal subunit protein uS14 from Rickettsia bellii (strain OSU 85-389).